The following is a 157-amino-acid chain: Endoribonuclease YbeY (157 aa).

Residues H121, H125, and H131 each contribute to the Zn(2+) site.

It belongs to the endoribonuclease YbeY family. Zn(2+) serves as cofactor.

It localises to the cytoplasm. Its function is as follows. Single strand-specific metallo-endoribonuclease involved in late-stage 70S ribosome quality control and in maturation of the 3' terminus of the 16S rRNA. The chain is Endoribonuclease YbeY from Salinispora tropica (strain ATCC BAA-916 / DSM 44818 / JCM 13857 / NBRC 105044 / CNB-440).